The sequence spans 79 residues: Acyl carrier protein (79 aa).

Positions Glu2–Leu77 constitute a Carrier domain. Position 37 is an O-(pantetheine 4'-phosphoryl)serine (Ser37).

The protein belongs to the acyl carrier protein (ACP) family. 4'-phosphopantetheine is transferred from CoA to a specific serine of apo-ACP by AcpS. This modification is essential for activity because fatty acids are bound in thioester linkage to the sulfhydryl of the prosthetic group.

Its subcellular location is the cytoplasm. It participates in lipid metabolism; fatty acid biosynthesis. In terms of biological role, carrier of the growing fatty acid chain in fatty acid biosynthesis. This is Acyl carrier protein from Azoarcus sp. (strain BH72).